A 96-amino-acid chain; its full sequence is Nucleoid-associated protein CCA_00330 (96 aa).

The protein belongs to the YbaB/EbfC family. As to quaternary structure, homodimer.

It localises to the cytoplasm. The protein resides in the nucleoid. Its function is as follows. Binds to DNA and alters its conformation. May be involved in regulation of gene expression, nucleoid organization and DNA protection. This Chlamydia caviae (strain ATCC VR-813 / DSM 19441 / 03DC25 / GPIC) (Chlamydophila caviae) protein is Nucleoid-associated protein CCA_00330.